Reading from the N-terminus, the 141-residue chain is Nucleoside triphosphatase NudI (141 aa).

The Nudix hydrolase domain maps to 1–141 (MRQRTIVCPL…RHTLALKGLL (141 aa)). The short motif at 38–59 (GGVEPGERIEEALRREIREELG) is the Nudix box element.

It belongs to the Nudix hydrolase family. NudI subfamily. As to quaternary structure, monomer. The cofactor is Mg(2+).

It carries out the reaction a ribonucleoside 5'-triphosphate + H2O = a ribonucleoside 5'-phosphate + diphosphate + H(+). The catalysed reaction is a 2'-deoxyribonucleoside 5'-triphosphate + H2O = a 2'-deoxyribonucleoside 5'-phosphate + diphosphate + H(+). The enzyme catalyses dUTP + H2O = dUMP + diphosphate + H(+). It catalyses the reaction dTTP + H2O = dTMP + diphosphate + H(+). It carries out the reaction dCTP + H2O = dCMP + diphosphate + H(+). Catalyzes the hydrolysis of nucleoside triphosphates, with a preference for pyrimidine deoxynucleoside triphosphates (dUTP, dTTP and dCTP). This is Nucleoside triphosphatase NudI from Salmonella paratyphi B (strain ATCC BAA-1250 / SPB7).